Here is a 215-residue protein sequence, read N- to C-terminus: uncharacterized protein (215 aa).

Helical transmembrane passes span 21 to 40 (IIKYLVIFFLFCIISTVLIN), 50 to 69 (LIFSVICLLISLIGFSSVIF), 95 to 117 (FFAIFISSTIGLVFVLPIIYVLF), 122 to 144 (LEIIFFFSSVWMILVLSSSLVVL), 156 to 178 (ANFVGTFIMPLLIPNIIMTGLIL), and 183 to 205 (LQLIFIMIGINLVFLPISFFLSS).

This sequence belongs to the CcmB/CycW/HelB family.

The protein resides in the cell membrane. This is an uncharacterized protein from Rickettsia conorii (strain ATCC VR-613 / Malish 7).